The following is a 348-amino-acid chain: Ion-translocating oxidoreductase complex subunit D (348 aa).

4 helical membrane passes run 23–43 (WVLA…GYGT), 44–64 (LIQL…IMLL), 72–91 (ALRD…AIPP), and 126–146 (IAYV…MAPI). Residue Thr-187 is modified to FMN phosphoryl threonine. Helical transmembrane passes span 214–234 (FAGI…LILL), 243–263 (IPMA…LFAP), 266–286 (TASP…FFIA), 300–320 (LIYG…GGFP), and 321–341 (DGVA…DYYT).

It belongs to the NqrB/RnfD family. As to quaternary structure, the complex is composed of six subunits: RnfA, RnfB, RnfC, RnfD, RnfE and RnfG. FMN serves as cofactor.

It localises to the cell inner membrane. In terms of biological role, part of a membrane-bound complex that couples electron transfer with translocation of ions across the membrane. The sequence is that of Ion-translocating oxidoreductase complex subunit D from Vibrio cholerae serotype O1 (strain ATCC 39315 / El Tor Inaba N16961).